We begin with the raw amino-acid sequence, 831 residues long: Multiphosphoryl transfer protein (831 aa).

The region spanning M1–S90 is the HPr domain. H15 (pros-phosphohistidine intermediate; for HPr activity) is an active-site residue. Phosphohistidine; by EI is present on H15. Positions G119–D650 are PTS EI. H298 acts as the Tele-phosphohistidine intermediate; for PTS EI activity in catalysis. Residue H298 is modified to Phosphohistidine; by autocatalysis. R405 and R441 together coordinate phosphoenolpyruvate. E540 and D564 together coordinate Mg(2+). Residues N563–D564 and R574 each bind phosphoenolpyruvate. The active-site Proton donor; for EI activity is C611. The PTS EIIA type-2 domain occupies P685–E828. The active-site Tele-phosphohistidine intermediate; for PTS EIIA activity is the H747. Phosphohistidine; by HPr is present on H747.

It belongs to the PEP-utilizing enzyme family. The cofactor is Mg(2+).

Its subcellular location is the cytoplasm. The catalysed reaction is L-histidyl-[protein] + phosphoenolpyruvate = N(pros)-phospho-L-histidyl-[protein] + pyruvate. It catalyses the reaction D-fructose(out) + N(pros)-phospho-L-histidyl-[protein] = D-fructose 1-phosphate(in) + L-histidyl-[protein]. Its function is as follows. Multifunctional protein that includes general (non sugar-specific) and sugar-specific components of the phosphoenolpyruvate-dependent sugar phosphotransferase system (sugar PTS). This major carbohydrate active transport system catalyzes the phosphorylation of incoming sugar substrates concomitantly with their translocation across the cell membrane. The enzyme II FryABC PTS system is involved in fructose transport. This Escherichia coli O157:H7 protein is Multiphosphoryl transfer protein (fryA).